The chain runs to 337 residues: Anthranilate phosphoribosyltransferase (337 aa).

Residues G81, 84–85, S89, 91–94, 109–117, and A121 each bind 5-phospho-alpha-D-ribose 1-diphosphate; these read GD, NVST, and KHGNRAATS. G81 lines the anthranilate pocket. S93 contacts Mg(2+). Residue N112 coordinates anthranilate. R167 is an anthranilate binding site. 2 residues coordinate Mg(2+): D226 and E227.

Belongs to the anthranilate phosphoribosyltransferase family. Homodimer. It depends on Mg(2+) as a cofactor.

It catalyses the reaction N-(5-phospho-beta-D-ribosyl)anthranilate + diphosphate = 5-phospho-alpha-D-ribose 1-diphosphate + anthranilate. Its pathway is amino-acid biosynthesis; L-tryptophan biosynthesis; L-tryptophan from chorismate: step 2/5. Functionally, catalyzes the transfer of the phosphoribosyl group of 5-phosphorylribose-1-pyrophosphate (PRPP) to anthranilate to yield N-(5'-phosphoribosyl)-anthranilate (PRA). In Methylorubrum extorquens (strain PA1) (Methylobacterium extorquens), this protein is Anthranilate phosphoribosyltransferase.